We begin with the raw amino-acid sequence, 244 residues long: 5-oxoprolinase subunit A (244 aa).

Belongs to the LamB/PxpA family. In terms of assembly, forms a complex composed of PxpA, PxpB and PxpC.

It catalyses the reaction 5-oxo-L-proline + ATP + 2 H2O = L-glutamate + ADP + phosphate + H(+). Catalyzes the cleavage of 5-oxoproline to form L-glutamate coupled to the hydrolysis of ATP to ADP and inorganic phosphate. This chain is 5-oxoprolinase subunit A, found in Shigella flexneri serotype 5b (strain 8401).